The chain runs to 88 residues: MQTGKDAASAAKAGMEKTKANVQEKAERMTTRDPLKKEMATEKKEDRVAAAEMGKRDAKAQHAAEKQGAATTGTGTTGYGATGNHTTF.

The tract at residues 1-88 is disordered; sequence MQTGKDAASA…YGATGNHTTF (88 aa). A compositionally biased stretch (basic and acidic residues) spans 14–65; that stretch reads GMEKTKANVQEKAERMTTRDPLKKEMATEKKEDRVAAAEMGKRDAKAQHAAE.

Belongs to the LEA type 1 family. In terms of tissue distribution, accumulates in developing seeds and drought-stressed leaves.

This chain is Protein LE25 (LE25), found in Solanum lycopersicum (Tomato).